Here is a 268-residue protein sequence, read N- to C-terminus: 4-hydroxy-tetrahydrodipicolinate reductase (268 aa).

Residues 10–15, aspartate 36, 99–101, and 123–126 each bind NAD(+); these read GAGGRM, GTT, and APNM. Histidine 156 functions as the Proton donor/acceptor in the catalytic mechanism. Residue histidine 157 participates in (S)-2,3,4,5-tetrahydrodipicolinate binding. Catalysis depends on lysine 160, which acts as the Proton donor. Residue 166-167 participates in (S)-2,3,4,5-tetrahydrodipicolinate binding; it reads GT.

Belongs to the DapB family.

It localises to the cytoplasm. It carries out the reaction (S)-2,3,4,5-tetrahydrodipicolinate + NAD(+) + H2O = (2S,4S)-4-hydroxy-2,3,4,5-tetrahydrodipicolinate + NADH + H(+). The catalysed reaction is (S)-2,3,4,5-tetrahydrodipicolinate + NADP(+) + H2O = (2S,4S)-4-hydroxy-2,3,4,5-tetrahydrodipicolinate + NADPH + H(+). It participates in amino-acid biosynthesis; L-lysine biosynthesis via DAP pathway; (S)-tetrahydrodipicolinate from L-aspartate: step 4/4. Catalyzes the conversion of 4-hydroxy-tetrahydrodipicolinate (HTPA) to tetrahydrodipicolinate. The polypeptide is 4-hydroxy-tetrahydrodipicolinate reductase (Dechloromonas aromatica (strain RCB)).